The primary structure comprises 393 residues: Na(+)/H(+) antiporter NhaA (393 aa).

The next 11 helical transmembrane spans lie at 18-38 (AGGV…NSPW), 65-85 (MLIW…GLEI), 101-121 (MLPA…YAAI), 131-151 (GWGI…VLLG), 160-180 (VFLT…IAFF), 184-204 (NLSP…LGLN), 210-230 (AVGP…KSGI), 260-280 (ALQP…NAGV), 298-318 (IAFG…WLLI), 334-354 (FFGV…IGSL), and 369-389 (IGVL…LLAS).

This sequence belongs to the NhaA Na(+)/H(+) (TC 2.A.33) antiporter family.

The protein resides in the cell inner membrane. The catalysed reaction is Na(+)(in) + 2 H(+)(out) = Na(+)(out) + 2 H(+)(in). Functionally, na(+)/H(+) antiporter that extrudes sodium in exchange for external protons. The chain is Na(+)/H(+) antiporter NhaA from Albidiferax ferrireducens (strain ATCC BAA-621 / DSM 15236 / T118) (Rhodoferax ferrireducens).